Here is a 160-residue protein sequence, read N- to C-terminus: Endoribonuclease YbeY (160 aa).

Histidine 118, histidine 122, and histidine 128 together coordinate Zn(2+).

This sequence belongs to the endoribonuclease YbeY family. The cofactor is Zn(2+).

Its subcellular location is the cytoplasm. Single strand-specific metallo-endoribonuclease involved in late-stage 70S ribosome quality control and in maturation of the 3' terminus of the 16S rRNA. This Treponema pallidum (strain Nichols) protein is Endoribonuclease YbeY.